Here is an 813-residue protein sequence, read N- to C-terminus: Leucine--tRNA ligase (813 aa).

The 'HIGH' region motif lies at 42 to 52; sequence PYTSGNLHIGH. Positions 580-584 match the 'KMSKS' region motif; sequence KMSKS. Residue K583 coordinates ATP.

This sequence belongs to the class-I aminoacyl-tRNA synthetase family.

Its subcellular location is the cytoplasm. The enzyme catalyses tRNA(Leu) + L-leucine + ATP = L-leucyl-tRNA(Leu) + AMP + diphosphate. The protein is Leucine--tRNA ligase of Dehalococcoides mccartyi (strain ATCC BAA-2100 / JCM 16839 / KCTC 5957 / BAV1).